Here is a 346-residue protein sequence, read N- to C-terminus: Annexin A1 (346 aa).

Position 2 is an N-acetylalanine (Ala-2). Ser-5 is subject to Phosphoserine; by TRPM7. Gln-19 participates in a covalent cross-link: Isoglutamyl lysine isopeptide (Gln-Lys) (interchain with K-?). Phosphotyrosine; by EGFR is present on Tyr-21. A phosphoserine mark is found at Ser-34 and Ser-37. Thr-41 is modified (phosphothreonine). 4 Annexin repeats span residues 42-113, 114-185, 197-269, and 273-344; these read FNPS…ALLK, TPAQ…SLAK, DLAD…VIVK, and SQPM…ALCG. Residue Lys-58 is modified to N6-acetyllysine. Positions 59, 60, 62, 97, 100, 105, 127, 129, 131, 132, and 134 each coordinate Ca(2+). A Phosphothreonine modification is found at Thr-136. Ca(2+) is bound by residues Asp-171, Gly-210, and Arg-213. Residue Lys-214 forms a Glycyl lysine isopeptide (Lys-Gly) (interchain with G-Cter in SUMO1); alternate linkage. A Glycyl lysine isopeptide (Lys-Gly) (interchain with G-Cter in SUMO2); alternate cross-link involves residue Lys-214. Ca(2+) is bound at residue Gly-215. An N6-acetyllysine modification is found at Lys-239. 3 residues coordinate Ca(2+): Asp-253, Glu-255, and Leu-256. A Glycyl lysine isopeptide (Lys-Gly) (interchain with G-Cter in SUMO1) cross-link involves residue Lys-257. The Ca(2+) site is built by Glu-261, Met-286, Gly-288, and Gly-290. Lys-312 is subject to N6-acetyllysine. An intrachain disulfide couples Cys-324 to Cys-343. Leu-328, Glu-330, and Thr-331 together coordinate Ca(2+). A Glycyl lysine isopeptide (Lys-Gly) (interchain with G-Cter in SUMO1) cross-link involves residue Lys-332. A Ca(2+)-binding site is contributed by Glu-336.

The protein belongs to the annexin family. In terms of assembly, homodimer; non-covalently linked. Homodimer; linked by transglutamylation. Homodimers linked by transglutamylation are observed in placenta, but not in other tissues. Interacts with S100A11. Heterotetramer, formed by two molecules each of S100A11 and ANXA1. Interacts with DYSF. Interacts with EGFR. Phosphorylated by protein kinase C, EGFR and TRPM7. Phosphorylated in response to EGF treatment. In terms of processing, sumoylated. Post-translationally, proteolytically cleaved by cathepsin CTSG to release the active N-terminal peptide Ac2-26. As to expression, detected on surface epithelia and mucosal glands in nasal cavity, trachea, bronchi and bronchioles. Detected in blood vessel endothelial cells. Detected in neutrophils (at protein level).

The protein localises to the nucleus. It is found in the cytoplasm. It localises to the cell projection. The protein resides in the cilium. Its subcellular location is the basolateral cell membrane. The protein localises to the lateral cell membrane. It is found in the cell membrane. It localises to the apical cell membrane. The protein resides in the membrane. Its subcellular location is the endosome membrane. The protein localises to the secreted. It is found in the extracellular space. It localises to the early endosome. The protein resides in the cytoplasmic vesicle membrane. Its subcellular location is the extracellular exosome. The protein localises to the cytoplasmic vesicle. It is found in the secretory vesicle lumen. It localises to the phagocytic cup. Functionally, plays important roles in the innate immune response as effector of glucocorticoid-mediated responses and regulator of the inflammatory process. Has anti-inflammatory activity. Plays a role in glucocorticoid-mediated down-regulation of the early phase of the inflammatory response. Contributes to the adaptive immune response by enhancing signaling cascades that are triggered by T-cell activation, regulates differentiation and proliferation of activated T-cells. Promotes the differentiation of T-cells into Th1 cells and negatively regulates differentiation into Th2 cells. Has no effect on unstimulated T-cells. Negatively regulates hormone exocytosis via activation of the formyl peptide receptors and reorganization of the actin cytoskeleton. Has high affinity for Ca(2+) and can bind up to eight Ca(2+) ions. Displays Ca(2+)-dependent binding to phospholipid membranes. Plays a role in the formation of phagocytic cups and phagosomes. Plays a role in phagocytosis by mediating the Ca(2+)-dependent interaction between phagosomes and the actin cytoskeleton. Its function is as follows. Functions at least in part by activating the formyl peptide receptors and downstream signaling cascades. Promotes chemotaxis of granulocytes and monocytes via activation of the formyl peptide receptors. Promotes rearrangement of the actin cytoskeleton, cell polarization and cell migration. Promotes resolution of inflammation and wound healing. Acts via neutrophil N-formyl peptide receptors to enhance the release of CXCL2. The chain is Annexin A1 (ANXA1) from Bos taurus (Bovine).